Here is a 190-residue protein sequence, read N- to C-terminus: Interferon alpha-7 (190 aa).

The first 23 residues, 1 to 23 (MARLCAFLMVLAVMSYWPTCCLG), serve as a signal peptide directing secretion. 2 cysteine pairs are disulfide-bonded: cysteine 24-cysteine 122 and cysteine 52-cysteine 162. Asparagine 101 carries N-linked (GlcNAc...) asparagine glycosylation.

Belongs to the alpha/beta interferon family.

It localises to the secreted. Its function is as follows. Produced by macrophages, IFN-alpha have antiviral activities. Interferon stimulates the production of two enzymes: a protein kinase and an oligoadenylate synthetase. This chain is Interferon alpha-7 (Ifna7), found in Mus musculus (Mouse).